The sequence spans 435 residues: Arginine biosynthesis bifunctional protein ArgJ, mitochondrial (435 aa).

Residues threonine 179, lysine 205, threonine 216, glutamate 302, asparagine 430, and serine 435 each coordinate substrate. The active-site Nucleophile is the threonine 216.

Belongs to the ArgJ family. As to quaternary structure, heterodimer of an alpha and a beta chain. In terms of processing, the alpha and beta chains are autoproteolytically processed from a single precursor protein within the mitochondrion.

It localises to the mitochondrion matrix. The enzyme catalyses N(2)-acetyl-L-ornithine + L-glutamate = N-acetyl-L-glutamate + L-ornithine. It catalyses the reaction L-glutamate + acetyl-CoA = N-acetyl-L-glutamate + CoA + H(+). Its pathway is amino-acid biosynthesis; L-arginine biosynthesis; L-ornithine and N-acetyl-L-glutamate from L-glutamate and N(2)-acetyl-L-ornithine (cyclic): step 1/1. It functions in the pathway amino-acid biosynthesis; L-arginine biosynthesis; N(2)-acetyl-L-ornithine from L-glutamate: step 1/4. Its function is as follows. Catalyzes two activities which are involved in the cyclic version of arginine biosynthesis: the synthesis of acetylglutamate from glutamate and acetyl-CoA, and of ornithine by transacetylation between acetylornithine and glutamate. This is Arginine biosynthesis bifunctional protein ArgJ, mitochondrial from Schizosaccharomyces japonicus (strain yFS275 / FY16936) (Fission yeast).